The following is a 1826-amino-acid chain: 1,3-beta-glucan synthase component bgs3 (1826 aa).

A compositionally biased stretch (polar residues) spans 34 to 43; the sequence is QSNDQYNNIQ. The tract at residues 34–90 is disordered; the sequence is QSNDQYNNIQHPAPSFANPFIHEQDDSYSDILEEEPDEDAYDSPERPSSTEEFISQD. Residues 59–75 show a composition bias toward acidic residues; it reads DSYSDILEEEPDEDAYD. The next 7 helical transmembrane spans lie at 427-447, 465-485, 504-524, 543-563, 597-617, 637-657, and 660-680; these read IWIL…PTIY, WCAP…ALIL, LIFV…IFGF, FFFS…FLLG, AALW…FLTL, FMIG…LVYL, and LVLF…MFSI. At serine 885 the chain carries Phosphoserine. A run of 11 helical transmembrane segments spans residues 1272-1292, 1329-1349, 1375-1397, 1417-1437, 1438-1458, 1531-1551, 1571-1591, 1607-1627, 1642-1662, 1701-1721, and 1770-1790; these read VFIM…GAMY, IISI…HDLL, VTQN…YIAT, GSSI…TMTV, WTTH…CPFI, IFTE…AYTF, IWIM…ILLM, YGAV…VFTF, VLGC…VVVF, CKVV…CILF, and SLLF…PLVL.

This sequence belongs to the glycosyltransferase 48 family. As to quaternary structure, component of the 1,3-beta-glucan synthase (GS) complex, composed of at least the alternate catalytic subunits bgs1, bgs2, bgs3, and bgs4, and a regulatory subunit chr4.

It is found in the membrane. The catalysed reaction is [(1-&gt;3)-beta-D-glucosyl](n) + UDP-alpha-D-glucose = [(1-&gt;3)-beta-D-glucosyl](n+1) + UDP + H(+). Functionally, alternate catalytic subunit of the 1,3-beta-glucan synthase (GS) complex. Synthesizes 1,3-beta-glucan, a major structural component of the yeast cell wall. Required for cell wall biosynthesis and cell elongation. In Schizosaccharomyces pombe (strain 972 / ATCC 24843) (Fission yeast), this protein is 1,3-beta-glucan synthase component bgs3.